A 194-amino-acid polypeptide reads, in one-letter code: Aminodeoxychorismate/anthranilate synthase component 2 (194 aa).

Residues 1 to 194 (MILMIDNYDS…IETYRKEVIA (194 aa)) form the Glutamine amidotransferase type-1 domain. Active-site residues include C79, H168, and E170.

As to quaternary structure, monomer. Heterodimer consisting of two non-identical subunits: a glutamine amidotransferase subunit (PabA) and a aminodeoxychorismate synthase subunit (PabB).

It carries out the reaction chorismate + L-glutamine = anthranilate + pyruvate + L-glutamate + H(+). The enzyme catalyses chorismate + L-glutamine = 4-amino-4-deoxychorismate + L-glutamate. The protein operates within amino-acid biosynthesis; L-tryptophan biosynthesis; L-tryptophan from chorismate: step 1/5. It participates in cofactor biosynthesis; tetrahydrofolate biosynthesis; 4-aminobenzoate from chorismate: step 1/2. Part of a heterodimeric complex that catalyzes the two-step biosynthesis of 4-amino-4-deoxychorismate (ADC), a precursor of p-aminobenzoate (PABA) and tetrahydrofolate. In the first step, a glutamine amidotransferase (PabA) generates ammonia as a substrate that, along with chorismate, is used in the second step, catalyzed by aminodeoxychorismate synthase (PabB) to produce ADC. PabA converts glutamine into glutamate only in the presence of stoichiometric amounts of PabB. Also involved in the biosynthesis of anthranilate. Complements a glutamine amidotransferase-negative mutant. In Bacillus subtilis (strain 168), this protein is Aminodeoxychorismate/anthranilate synthase component 2.